The sequence spans 86 residues: Small ribosomal subunit protein uS15 (86 aa).

Polar residues predominate over residues 1 to 10 (MSIDTQSIIE). The disordered stretch occupies residues 1-21 (MSIDTQSIIENNKRSAHDTGS).

Belongs to the universal ribosomal protein uS15 family. Part of the 30S ribosomal subunit. Forms a bridge to the 50S subunit in the 70S ribosome, contacting the 23S rRNA.

Its function is as follows. One of the primary rRNA binding proteins, it binds directly to 16S rRNA where it helps nucleate assembly of the platform of the 30S subunit by binding and bridging several RNA helices of the 16S rRNA. Functionally, forms an intersubunit bridge (bridge B4) with the 23S rRNA of the 50S subunit in the ribosome. The chain is Small ribosomal subunit protein uS15 from Xylella fastidiosa (strain 9a5c).